The sequence spans 318 residues: Chlorophyllase-2 (318 aa).

A GXSXG motif is present at residues 136 to 140 (GHSRG). Ser138 functions as the Nucleophile in the catalytic mechanism. Residues Asp167 and His244 each act as charge relay system in the active site.

This sequence belongs to the AB hydrolase superfamily. Lipase family. Expressed in leaves, flowers and flower buds, but not in roots.

It is found in the cytoplasm. The protein localises to the cytosol. The enzyme catalyses a chlorophyll + H2O = a chlorophyllide + phytol + H(+). The catalysed reaction is chlorophyll a + H2O = phytol + chlorophyllide a + H(+). It functions in the pathway porphyrin-containing compound metabolism; chlorophyll degradation. Functionally, catalyzes the hydrolysis of ester bond in chlorophyll to yield chlorophyllide and phytol. Does not seem to be required for chlorophyll degradation during senescence. The protein is Chlorophyllase-2 of Arabidopsis thaliana (Mouse-ear cress).